A 619-amino-acid polypeptide reads, in one-letter code: Phosphomethylpyrimidine synthase (619 aa).

Positions 93-104 (IKPEDNGLKGPD) are enriched in basic and acidic residues. The disordered stretch occupies residues 93–114 (IKPEDNGLKGPDRSGGVTPFPN). Residues asparagine 217, methionine 246, tyrosine 275, histidine 311, 331 to 333 (SRG), 372 to 375 (DGLR), and glutamate 411 contribute to the substrate site. Histidine 415 serves as a coordination point for Zn(2+). Residue tyrosine 438 coordinates substrate. Histidine 479 contributes to the Zn(2+) binding site. 3 residues coordinate [4Fe-4S] cluster: cysteine 559, cysteine 562, and cysteine 567.

It belongs to the ThiC family. In terms of assembly, homodimer. Requires [4Fe-4S] cluster as cofactor.

The catalysed reaction is 5-amino-1-(5-phospho-beta-D-ribosyl)imidazole + S-adenosyl-L-methionine = 4-amino-2-methyl-5-(phosphooxymethyl)pyrimidine + CO + 5'-deoxyadenosine + formate + L-methionine + 3 H(+). Its pathway is cofactor biosynthesis; thiamine diphosphate biosynthesis. Its function is as follows. Catalyzes the synthesis of the hydroxymethylpyrimidine phosphate (HMP-P) moiety of thiamine from aminoimidazole ribotide (AIR) in a radical S-adenosyl-L-methionine (SAM)-dependent reaction. This chain is Phosphomethylpyrimidine synthase, found in Rhizorhabdus wittichii (strain DSM 6014 / CCUG 31198 / JCM 15750 / NBRC 105917 / EY 4224 / RW1) (Sphingomonas wittichii).